A 181-amino-acid polypeptide reads, in one-letter code: CDP-diacylglycerol--glycerol-3-phosphate 3-phosphatidyltransferase (181 aa).

4 helical membrane-spanning segments follow: residues 8 to 28 (PNYL…TFYI), 35 to 55 (MLGA…GYIA), 64 to 84 (FGKM…IIML), and 148 to 168 (IIYL…LTII).

It belongs to the CDP-alcohol phosphatidyltransferase class-I family.

It is found in the cell membrane. It carries out the reaction a CDP-1,2-diacyl-sn-glycerol + sn-glycerol 3-phosphate = a 1,2-diacyl-sn-glycero-3-phospho-(1'-sn-glycero-3'-phosphate) + CMP + H(+). It functions in the pathway phospholipid metabolism; phosphatidylglycerol biosynthesis; phosphatidylglycerol from CDP-diacylglycerol: step 1/2. Its function is as follows. This protein catalyzes the committed step to the synthesis of the acidic phospholipids. The sequence is that of CDP-diacylglycerol--glycerol-3-phosphate 3-phosphatidyltransferase (pgsA) from Rickettsia bellii (strain RML369-C).